A 353-amino-acid chain; its full sequence is Photosystem II D2 protein (353 aa).

Thr-2 bears the N-acetylthreonine mark. At Thr-2 the chain carries Phosphothreonine. A helical transmembrane segment spans residues 41 to 61 (CAYFALGGWFTGTTFVTSWYT). His-118 lines the chlorophyll a pocket. Residues 125-141 (GFMLRQFELARSVQLRP) traverse the membrane as a helical segment. Pheophytin a contacts are provided by Gln-130 and Asn-143. Residues 153–166 (VFVSVFLIYPLGQS) traverse the membrane as a helical segment. Residue His-198 participates in chlorophyll a binding. Residues 208–228 (AALLCAIHGATVENTLFEDGD) traverse the membrane as a helical segment. Positions 215 and 262 each coordinate a plastoquinone. Residue His-215 participates in Fe cation binding. Position 269 (His-269) interacts with Fe cation. Residues 279–295 (GLWMSALGVVGLALNLR) form a helical membrane-spanning segment.

This sequence belongs to the reaction center PufL/M/PsbA/D family. As to quaternary structure, PSII is composed of 1 copy each of membrane proteins PsbA, PsbB, PsbC, PsbD, PsbE, PsbF, PsbH, PsbI, PsbJ, PsbK, PsbL, PsbM, PsbT, PsbX, PsbY, PsbZ, Psb30/Ycf12, at least 3 peripheral proteins of the oxygen-evolving complex and a large number of cofactors. It forms dimeric complexes. It depends on The D1/D2 heterodimer binds P680, chlorophylls that are the primary electron donor of PSII, and subsequent electron acceptors. It shares a non-heme iron and each subunit binds pheophytin, quinone, additional chlorophylls, carotenoids and lipids. There is also a Cl(-1) ion associated with D1 and D2, which is required for oxygen evolution. The PSII complex binds additional chlorophylls, carotenoids and specific lipids. as a cofactor.

The protein localises to the plastid. Its subcellular location is the chloroplast thylakoid membrane. It catalyses the reaction 2 a plastoquinone + 4 hnu + 2 H2O = 2 a plastoquinol + O2. Its function is as follows. Photosystem II (PSII) is a light-driven water:plastoquinone oxidoreductase that uses light energy to abstract electrons from H(2)O, generating O(2) and a proton gradient subsequently used for ATP formation. It consists of a core antenna complex that captures photons, and an electron transfer chain that converts photonic excitation into a charge separation. The D1/D2 (PsbA/PsbD) reaction center heterodimer binds P680, the primary electron donor of PSII as well as several subsequent electron acceptors. D2 is needed for assembly of a stable PSII complex. This Chloranthus spicatus (Chulantree) protein is Photosystem II D2 protein.